Here is a 264-residue protein sequence, read N- to C-terminus: 5'-nucleotidase SurE (264 aa).

A divalent metal cation is bound by residues Asp8, Asp9, Ser39, and Asn95.

The protein belongs to the SurE nucleotidase family. It depends on a divalent metal cation as a cofactor.

Its subcellular location is the cytoplasm. It carries out the reaction a ribonucleoside 5'-phosphate + H2O = a ribonucleoside + phosphate. In terms of biological role, nucleotidase that shows phosphatase activity on nucleoside 5'-monophosphates. This chain is 5'-nucleotidase SurE, found in Syntrophomonas wolfei subsp. wolfei (strain DSM 2245B / Goettingen).